The sequence spans 327 residues: Apoptosis facilitator Bcl-2-like protein 14 (327 aa).

Ser44 is subject to Phosphoserine. The BH3 signature appears at 212-226 (IVELLKYSGDQLERK). The BH2 signature appears at 308–315 (WIQQHGGW).

Belongs to the Bcl-2 family. Post-translationally, phosphorylated by MELK, leading to inhibit its pro-apoptotic function. In terms of tissue distribution, isoform 1 is widely expressed. Isoform 2 is testis-specific.

It is found in the cytoplasm. The protein localises to the cytosol. The protein resides in the endomembrane system. Plays a role in apoptosis. This chain is Apoptosis facilitator Bcl-2-like protein 14 (BCL2L14), found in Homo sapiens (Human).